A 527-amino-acid chain; its full sequence is Cytochrome P450 monooxyhenase eriA (527 aa).

The helical transmembrane segment at 17-37 threads the bilayer; that stretch reads LGVVDLSLLGVGAVIAFAWLF. N-linked (GlcNAc...) asparagine glycosylation is found at asparagine 77, asparagine 274, and asparagine 297. Heme is bound at residue cysteine 453.

The protein belongs to the cytochrome P450 family. Heme serves as cofactor.

The protein localises to the membrane. It catalyses the reaction cyathadiol + reduced [NADPH--hemoprotein reductase] + O2 = cyathatriol + oxidized [NADPH--hemoprotein reductase] + H2O + H(+). Its pathway is secondary metabolite biosynthesis. Cytochrome P450 monooxygenase; part of the gene cluster that mediates the biosynthesis of erinacines, cyathane-xylosides that show unique biological activities, including leishmanicidal activity, stimulating activity for nerve growth-factor synthesis, and agonistic activity toward the kappa opioid receptor. Within the pathway, eriA catalyzes C-11 hydroxylation in the presence of the short chain dehydrogenase/reductase (SDR) eriH, which leads to the production of cyathatriol. The first step of the erinacines biosynthesis pathway is catalyzed by the geranylgeranyl diphosphate (GGPP) synthase eriE via conversion of farnesyl pyrophosphate and isopentyl pyrophosphate into geranylgeranyl pyrophosphate (GGPP). GGPP is then substrate of the diterpene cyclase eriG for the production of cyatha-3,12-diene. The cytochrome P450 monooxygenase eriI then hydroxylates cyatha-3,12-diene at C-14 of the seven-membered ring to produce erinacol, which is further hydroxylated at C-15 by the cytochrome P450 monooxygenase eriC to yield cyathadiol. The cytochrome P450 monooxygenase eriA then catalyzes C-11 hydroxylation in the presence of the short chain dehydrogenase/reductase (SDR) eriH, which leads to the production of cyathatriol. The acetyltransferase eriL converts cyathatriol into 11-O-acetyl-cyathatriol. The SDR eriH catalyzes further oxidation of 11-O-acetyl-cyathatriol into 1-O-acetylcyathin A3. Finally, the glycosyl transferase eriJ tranfers xylose from UDP-xylose onto C-14 of 11-O-acetyl-cyathatriol to form eracine Q. EriJ is also able to convert 11-O-acetyl-cyathatriol to eracine Q2 by using UDP-D-glucose as cosubstrate, but at a lower rate. This is Cytochrome P450 monooxyhenase eriA from Hericium erinaceus (Lion's mane mushroom).